A 219-amino-acid polypeptide reads, in one-letter code: 2-hydroxy-3-keto-5-methylthiopentenyl-1-phosphate phosphatase (219 aa).

It belongs to the HAD-like hydrolase superfamily. MtnX family.

It catalyses the reaction 2-hydroxy-5-methylsulfanyl-3-oxopent-1-enyl phosphate + H2O = 1,2-dihydroxy-5-(methylsulfanyl)pent-1-en-3-one + phosphate. The protein operates within amino-acid biosynthesis; L-methionine biosynthesis via salvage pathway; L-methionine from S-methyl-5-thio-alpha-D-ribose 1-phosphate: step 4/6. Functionally, dephosphorylates 2-hydroxy-3-keto-5-methylthiopentenyl-1-phosphate (HK-MTPenyl-1-P) yielding 1,2-dihydroxy-3-keto-5-methylthiopentene (DHK-MTPene). The chain is 2-hydroxy-3-keto-5-methylthiopentenyl-1-phosphate phosphatase from Bacillus cereus (strain AH187).